The following is a 553-amino-acid chain: CTP synthase (553 aa).

Positions 1-266 (MKYIFVTGGV…GKAVEDLLGL (266 aa)) are amidoligase domain. Ser12 contributes to the CTP binding site. Position 12 (Ser12) interacts with UTP. Residue 13–18 (SLGKGV) participates in ATP binding. Tyr53 lines the L-glutamine pocket. Residue Asp70 participates in ATP binding. 2 residues coordinate Mg(2+): Asp70 and Glu140. Residues 147–149 (DIE), 187–192 (KTKPTQ), and Lys223 contribute to the CTP site. Residues 187-192 (KTKPTQ) and Lys223 contribute to the UTP site. Residues 291 to 541 (TIAIAGKYTE…VAAALQSGPS (251 aa)) form the Glutamine amidotransferase type-1 domain. Gly353 lines the L-glutamine pocket. Catalysis depends on Cys380, which acts as the Nucleophile; for glutamine hydrolysis. L-glutamine is bound by residues 381 to 384 (LGMQ), Glu404, and Arg464. Active-site residues include His514 and Glu516.

It belongs to the CTP synthase family. As to quaternary structure, homotetramer.

It catalyses the reaction UTP + L-glutamine + ATP + H2O = CTP + L-glutamate + ADP + phosphate + 2 H(+). The enzyme catalyses L-glutamine + H2O = L-glutamate + NH4(+). The catalysed reaction is UTP + NH4(+) + ATP = CTP + ADP + phosphate + 2 H(+). It participates in pyrimidine metabolism; CTP biosynthesis via de novo pathway; CTP from UDP: step 2/2. Allosterically activated by GTP, when glutamine is the substrate; GTP has no effect on the reaction when ammonia is the substrate. The allosteric effector GTP functions by stabilizing the protein conformation that binds the tetrahedral intermediate(s) formed during glutamine hydrolysis. Inhibited by the product CTP, via allosteric rather than competitive inhibition. Catalyzes the ATP-dependent amination of UTP to CTP with either L-glutamine or ammonia as the source of nitrogen. Regulates intracellular CTP levels through interactions with the four ribonucleotide triphosphates. In Deinococcus geothermalis (strain DSM 11300 / CIP 105573 / AG-3a), this protein is CTP synthase.